The primary structure comprises 243 residues: Ubiquinone/menaquinone biosynthesis C-methyltransferase UbiE (243 aa).

S-adenosyl-L-methionine contacts are provided by residues Thr-69, Asp-90, and 116 to 117 (DA).

Belongs to the class I-like SAM-binding methyltransferase superfamily. MenG/UbiE family.

It catalyses the reaction a 2-demethylmenaquinol + S-adenosyl-L-methionine = a menaquinol + S-adenosyl-L-homocysteine + H(+). The enzyme catalyses a 2-methoxy-6-(all-trans-polyprenyl)benzene-1,4-diol + S-adenosyl-L-methionine = a 5-methoxy-2-methyl-3-(all-trans-polyprenyl)benzene-1,4-diol + S-adenosyl-L-homocysteine + H(+). It participates in quinol/quinone metabolism; menaquinone biosynthesis; menaquinol from 1,4-dihydroxy-2-naphthoate: step 2/2. Its pathway is cofactor biosynthesis; ubiquinone biosynthesis. Functionally, methyltransferase required for the conversion of demethylmenaquinol (DMKH2) to menaquinol (MKH2) and the conversion of 2-polyprenyl-6-methoxy-1,4-benzoquinol (DDMQH2) to 2-polyprenyl-3-methyl-6-methoxy-1,4-benzoquinol (DMQH2). The chain is Ubiquinone/menaquinone biosynthesis C-methyltransferase UbiE from Burkholderia vietnamiensis (strain G4 / LMG 22486) (Burkholderia cepacia (strain R1808)).